The sequence spans 79 residues: ATP synthase subunit 9, mitochondrial (79 aa).

Helical transmembrane passes span 21 to 41 (SGLIGAGAGVGIVFGCLILAF) and 59 to 79 (FALTEAIGLLALVMAFLILFI).

It belongs to the ATPase C chain family. In terms of assembly, F-type ATPases have 2 components, CF(1) - the catalytic core - and CF(0) - the membrane proton channel. CF(1) has five subunits: alpha(3), beta(3), gamma(1), delta(1), epsilon(1). CF(0) has three main subunits: a, b and c.

It is found in the mitochondrion membrane. Mitochondrial membrane ATP synthase (F(1)F(0) ATP synthase or Complex V) produces ATP from ADP in the presence of a proton gradient across the membrane which is generated by electron transport complexes of the respiratory chain. F-type ATPases consist of two structural domains, F(1) - containing the extramembraneous catalytic core and F(0) - containing the membrane proton channel, linked together by a central stalk and a peripheral stalk. During catalysis, ATP synthesis in the catalytic domain of F(1) is coupled via a rotary mechanism of the central stalk subunits to proton translocation. Part of the complex F(0) domain. A homomeric c-ring of probably 10 subunits is part of the complex rotary element. This is ATP synthase subunit 9, mitochondrial (ATP9) from Acanthamoeba castellanii (Amoeba).